The following is an 83-amino-acid chain: Exodeoxyribonuclease 7 small subunit (83 aa).

The protein belongs to the XseB family. In terms of assembly, heterooligomer composed of large and small subunits.

It is found in the cytoplasm. The enzyme catalyses Exonucleolytic cleavage in either 5'- to 3'- or 3'- to 5'-direction to yield nucleoside 5'-phosphates.. Functionally, bidirectionally degrades single-stranded DNA into large acid-insoluble oligonucleotides, which are then degraded further into small acid-soluble oligonucleotides. The sequence is that of Exodeoxyribonuclease 7 small subunit from Rhizobium rhizogenes (strain K84 / ATCC BAA-868) (Agrobacterium radiobacter).